The following is a 425-amino-acid chain: Succinate--CoA ligase [ADP-forming] subunit beta, mitochondrial (425 aa).

The transit peptide at 1–14 (NNHGLQIQQQQQRN) directs the protein to the mitochondrion. In terms of domain architecture, ATP-grasp spans 23–250 (MELLQEAGVS…SNSAYRQKKI (228 aa)). Lys40 is modified (N6-acetyllysine). Phosphotyrosine is present on Tyr46. Lys50 is subject to N6-acetyllysine; alternate. Position 50 is an N6-succinyllysine; alternate (Lys50). ATP contacts are provided by residues Lys60 and 67–69 (GRG). Lys91, Lys101, Lys105, and Lys178 each carry N6-acetyllysine. 2 residues coordinate Mg(2+): Asn220 and Asp234. Ser241 carries the phosphoserine modification. Substrate is bound at residue Asn285. Residue Thr303 is modified to Phosphothreonine. An N6-acetyllysine modification is found at Lys330. 342-344 (GIM) is a binding site for substrate. Lys400 is modified (N6-acetyllysine).

Belongs to the succinate/malate CoA ligase beta subunit family. ATP-specific subunit beta subfamily. As to quaternary structure, heterodimer of an alpha and a beta subunit. The beta subunit determines specificity for ATP. Interacts with ALAS2. The cofactor is Mg(2+).

The protein localises to the mitochondrion. The enzyme catalyses succinate + ATP + CoA = succinyl-CoA + ADP + phosphate. It functions in the pathway carbohydrate metabolism; tricarboxylic acid cycle; succinate from succinyl-CoA (ligase route): step 1/1. In terms of biological role, ATP-specific succinyl-CoA synthetase functions in the citric acid cycle (TCA), coupling the hydrolysis of succinyl-CoA to the synthesis of ATP and thus represents the only step of substrate-level phosphorylation in the TCA. The beta subunit provides nucleotide specificity of the enzyme and binds the substrate succinate, while the binding sites for coenzyme A and phosphate are found in the alpha subunit. In Sus scrofa (Pig), this protein is Succinate--CoA ligase [ADP-forming] subunit beta, mitochondrial.